Reading from the N-terminus, the 295-residue chain is Ribosomal RNA small subunit methyltransferase A (295 aa).

S-adenosyl-L-methionine is bound by residues N29, L31, G56, E77, D102, and N128.

The protein belongs to the class I-like SAM-binding methyltransferase superfamily. rRNA adenine N(6)-methyltransferase family. RsmA subfamily.

It localises to the cytoplasm. It carries out the reaction adenosine(1518)/adenosine(1519) in 16S rRNA + 4 S-adenosyl-L-methionine = N(6)-dimethyladenosine(1518)/N(6)-dimethyladenosine(1519) in 16S rRNA + 4 S-adenosyl-L-homocysteine + 4 H(+). In terms of biological role, specifically dimethylates two adjacent adenosines (A1518 and A1519) in the loop of a conserved hairpin near the 3'-end of 16S rRNA in the 30S particle. May play a critical role in biogenesis of 30S subunits. The polypeptide is Ribosomal RNA small subunit methyltransferase A (Listeria monocytogenes serotype 4b (strain CLIP80459)).